The primary structure comprises 403 residues: Cysteine desulfurase IscS (403 aa).

Residues 75 to 76 (AT), N155, Q183, and 203 to 205 (SAH) contribute to the pyridoxal 5'-phosphate site. K206 carries the post-translational modification N6-(pyridoxal phosphate)lysine. Position 243 (T243) interacts with pyridoxal 5'-phosphate. The active-site Cysteine persulfide intermediate is the C328. C328 serves as a coordination point for [2Fe-2S] cluster.

The protein belongs to the class-V pyridoxal-phosphate-dependent aminotransferase family. NifS/IscS subfamily. Homodimer. Forms a heterotetramer with IscU, interacts with other sulfur acceptors. Requires pyridoxal 5'-phosphate as cofactor.

It is found in the cytoplasm. The catalysed reaction is (sulfur carrier)-H + L-cysteine = (sulfur carrier)-SH + L-alanine. Its pathway is cofactor biosynthesis; iron-sulfur cluster biosynthesis. In terms of biological role, master enzyme that delivers sulfur to a number of partners involved in Fe-S cluster assembly, tRNA modification or cofactor biosynthesis. Catalyzes the removal of elemental sulfur atoms from cysteine to produce alanine. Functions as a sulfur delivery protein for Fe-S cluster synthesis onto IscU, an Fe-S scaffold assembly protein, as well as other S acceptor proteins. The sequence is that of Cysteine desulfurase IscS from Psychromonas ingrahamii (strain DSM 17664 / CCUG 51855 / 37).